Consider the following 372-residue polypeptide: MRDKVTGARRWVVKIGSALLTADGRGLDRNAMAVWVEQMVALHCAGIELVLVSSGAVAAGMSRLGWVSRPSAMHELQAAASVGQMGLVQAWESSFALHGLQTAQVLLTHDDLSDRKRYLNARSTLRTLVELGVVPVINENDTVVTDEIRFGDNDTLAALVANLVEADLLVILTDRDGMFDADPRNNPDAQLIYEARADDPQLDAVAGGSAGALGRGGMQTKLRAARLAARSGGHTVIVGGRIERVLDRLRAGERLGTLLTPDRSRKAARKQWLAGHLQMRGTLVLDDGAVKAVSQDHKSLLPVGVKAVQGSFRRGEMVVCVDQGGREVARGLVNYSALEAQKILGQPTDAIEALLGYVDGPELVHRDNLVLV.

Lys-14 contacts ATP. The substrate site is built by Ser-54, Asp-141, and Asn-153. Residue 173–174 coordinates ATP; that stretch reads TD. In terms of domain architecture, PUA spans 280 to 358; the sequence is RGTLVLDDGA…DAIEALLGYV (79 aa).

This sequence belongs to the glutamate 5-kinase family.

The protein localises to the cytoplasm. It carries out the reaction L-glutamate + ATP = L-glutamyl 5-phosphate + ADP. Its pathway is amino-acid biosynthesis; L-proline biosynthesis; L-glutamate 5-semialdehyde from L-glutamate: step 1/2. Functionally, catalyzes the transfer of a phosphate group to glutamate to form L-glutamate 5-phosphate. This Pseudomonas aeruginosa (strain UCBPP-PA14) protein is Glutamate 5-kinase.